Here is a 1021-residue protein sequence, read N- to C-terminus: Peroxisomal ATPase PEX6 (1021 aa).

763 to 770 (GPPGTGKT) lines the ATP pocket.

Belongs to the AAA ATPase family. As to quaternary structure, interacts with PEX1; forming the PEX1-PEX6 AAA ATPase complex, which is composed of a heterohexamer formed by a trimer of PEX1-PEX6 dimers.

Its subcellular location is the cytoplasm. The protein resides in the cytosol. The protein localises to the peroxisome membrane. It catalyses the reaction ATP + H2O = ADP + phosphate + H(+). In terms of biological role, component of the PEX1-PEX6 AAA ATPase complex, a protein dislocase complex that mediates the ATP-dependent extraction of the PEX5 receptor from peroxisomal membranes, an essential step for PEX5 recycling. Specifically recognizes PEX5 monoubiquitinated at 'Cys-6', and pulls it out of the peroxisome lumen through the PEX2-PEX10-PEX12 retrotranslocation channel. Extraction by the PEX1-PEX6 AAA ATPase complex is accompanied by unfolding of the TPR repeats and release of bound cargo from PEX5. This chain is Peroxisomal ATPase PEX6 (PEX6), found in Eremothecium gossypii (strain ATCC 10895 / CBS 109.51 / FGSC 9923 / NRRL Y-1056) (Yeast).